The primary structure comprises 70 residues: DNA gyrase inhibitor YacG (70 aa).

Zn(2+)-binding residues include Cys-9, Cys-12, Cys-28, and Cys-32. Positions 43–70 (ESRKIPGSSIDPESIVTSNNKQDNEDEQ) are disordered.

The protein belongs to the DNA gyrase inhibitor YacG family. In terms of assembly, interacts with GyrB. The cofactor is Zn(2+).

In terms of biological role, inhibits all the catalytic activities of DNA gyrase by preventing its interaction with DNA. Acts by binding directly to the C-terminal domain of GyrB, which probably disrupts DNA binding by the gyrase. The protein is DNA gyrase inhibitor YacG of Legionella pneumophila (strain Paris).